Here is a 30-residue protein sequence, read N- to C-terminus: Varv peptide B (30 aa).

The segment at residues 1–30 (GLPVCGETCFGGTCNTPGCSCDPWPMCSRN) is a cross-link (cyclopeptide (Gly-Asn)). 3 disulfides stabilise this stretch: Cys5-Cys19, Cys9-Cys21, and Cys14-Cys27.

Post-translationally, this is a cyclic peptide.

Probably participates in a plant defense mechanism. The protein is Varv peptide B of Viola arvensis (European field pansy).